Here is a 350-residue protein sequence, read N- to C-terminus: Cilia- and flagella-associated protein 36 (350 aa).

A coiled-coil region spans residues 142 to 167 (SELEQQEMKILQEVLRRSKEEYDLQM). 2 disordered regions span residues 171–233 (GLGS…ATTA) and 301–337 (RQTG…QKRK). The segment covering 177 to 220 (LASTSSSVSETPQNPEQRLSNGVSDPLTLTQPDSEMEESSTATQ) has biased composition (polar residues). Residues 280–350 (VALQQRSEYL…EKLKEEVIKK (71 aa)) adopt a coiled-coil conformation.

The protein belongs to the CFAP36 family.

The protein resides in the nucleus. Its subcellular location is the cytoplasm. It is found in the cell projection. It localises to the cilium. The protein localises to the flagellum. This chain is Cilia- and flagella-associated protein 36, found in Danio rerio (Zebrafish).